The chain runs to 462 residues: MSVAGGSISTAAGNAGKNNALPMAQLADGWLELESDPGLFTLLLEDFGCHDVQVEEVYDLQKPIESPYGFIFLFRWIEERRARRKIVETTAEIFVKDEEAISSIFFAQQVVPNSCATHALLSVLLNCNENNLQLGETLGRLKAHTKGMSPENKGLAIGNTPELACAHNSHAMPQARRRLERTGAGVASCRFTGEAFHFVSFVPINGQLFELDGLKPYPMNHGCWEEHEDWTDKFRRVMAERLGIATGEQDIRFNLMAVVPDRRIAITHKLKMLRTNQAIVSGTLQKLLKADEQGERDEQQRPDTPTTLLEPSAFTARDLQSLLKNLDTEIAINEQHLADENDRRQMFKVDASRRTHNYDKFICTFLSMLAHQGVLGELVSQHLLPSKKIANRLNRQTNAATAAANAANTNVAGTNAAGSKSQQQQQQTQQQPQQTQTAKNGKSPGKTPGRRRKGRNKCRKRK.

The region spanning 29–260 (GWLELESDPG…IRFNLMAVVP (232 aa)) is the UCH catalytic domain. C115 (nucleophile) is an active-site residue. The active-site Proton donor is the H197. Positions 357–385 (NYDKFICTFLSMLAHQGVLGELVSQHLLP) constitute a ULD domain. The tract at residues 387–462 (KKIANRLNRQ…KGRNKCRKRK (76 aa)) is positively charged C-terminal tail required for binding nucleosomes. Residues 413–447 (GTNAAGSKSQQQQQQTQQQPQQTQTAKNGKSPGKT) are compositionally biased toward low complexity. Residues 413 to 462 (GTNAAGSKSQQQQQQTQQQPQQTQTAKNGKSPGKTPGRRRKGRNKCRKRK) form a disordered region. Residues 448 to 462 (PGRRRKGRNKCRKRK) show a composition bias toward basic residues.

The protein belongs to the peptidase C12 family. BAP1 subfamily. In terms of assembly, catalytic component of the polycomb repressive deubiquitinase (PR-DUB) complex, at least composed of caly/calypso, Asx and sba (MBD5/6 homolog). The PR-DUB complex associates with nucleosomes to mediate deubiquitination of histone H2AK118ub1 substrates; the association requires the positively charged C-terminal tail of caly, probably due to direct binding of DNA. Interacts (via ULD domain) with Asx (via DEUBAD domain); the interaction produces a stable heterodimer with a composite binding site for ubiquitin. Homodimerizes (via coiled-coil hinge-region between the UCH and ULD domains) to mediate assembly of 2 copies of the caly-Asx heterodimer into a bisymmetric tetramer; dimerization enhances PR-DUB association with nucleosomes.

The protein resides in the nucleus. It carries out the reaction Thiol-dependent hydrolysis of ester, thioester, amide, peptide and isopeptide bonds formed by the C-terminal Gly of ubiquitin (a 76-residue protein attached to proteins as an intracellular targeting signal).. In terms of biological role, catalytic component of the polycomb repressive deubiquitinase (PR-DUB) complex, a complex that specifically mediates deubiquitination of histone H2A monoubiquitinated at 'Lys-119' (H2AK118ub1). Mediates bisymmetric organization of the PR-DUB complex and is involved in association with nucleosomes to mediate deubiquitination. Does not deubiquitinate monoubiquitinated histone H2B. Required to maintain the transcriptionally repressive state of homeotic genes throughout development. The PR-DUB complex has weak or no activity toward 'Lys-48'- and 'Lys-63'-linked polyubiquitin chains. Polycomb group (PcG) protein. The protein is Ubiquitin carboxyl-terminal hydrolase calypso of Drosophila grimshawi (Hawaiian fruit fly).